A 197-amino-acid polypeptide reads, in one-letter code: Transcription factor FapR (197 aa).

The protein belongs to the FapR family.

Functionally, transcriptional factor involved in regulation of membrane lipid biosynthesis by repressing genes involved in fatty acid and phospholipid metabolism. This Bacillus anthracis (strain A0248) protein is Transcription factor FapR.